The sequence spans 400 residues: tRNA(Met) cytidine acetate ligase (400 aa).

ATP contacts are provided by residues 7 to 20, G101, N159, and R184; that span reads IVEY…HLYH.

The protein belongs to the TmcAL family.

The protein resides in the cytoplasm. The enzyme catalyses cytidine(34) in elongator tRNA(Met) + acetate + ATP = N(4)-acetylcytidine(34) in elongator tRNA(Met) + AMP + diphosphate. In terms of biological role, catalyzes the formation of N(4)-acetylcytidine (ac(4)C) at the wobble position of elongator tRNA(Met), using acetate and ATP as substrates. First activates an acetate ion to form acetyladenylate (Ac-AMP) and then transfers the acetyl group to tRNA to form ac(4)C34. The chain is tRNA(Met) cytidine acetate ligase from Caldicellulosiruptor saccharolyticus (strain ATCC 43494 / DSM 8903 / Tp8T 6331).